Consider the following 711-residue polypeptide: Cyclomaltodextrin glucanotransferase (711 aa).

Residues 1-31 (MRRWLSLVLSMSFVFSAIFIVSDTQKVTVEA) form the signal peptide. The interval 32-165 (AGNLNKVNFT…GIKVIIDFAP (134 aa)) is A1. Ca(2+)-binding residues include aspartate 55, asparagine 57, asparagine 60, and asparagine 61. The cysteines at positions 71 and 78 are disulfide-linked. 2 residues coordinate Ca(2+): glycine 79 and aspartate 81. 127-128 (YW) is a binding site for substrate. Position 166 (asparagine 166) interacts with Ca(2+). The segment at 166–229 (NHTSPASETN…NLFDLADLNH (64 aa)) is b. Histidine 167 is a binding site for substrate. Isoleucine 217 is a binding site for Ca(2+). 220–223 (NLFD) provides a ligand contact to substrate. Aspartate 226 provides a ligand contact to Ca(2+). The segment at 230-433 (QNPVIDRYLK…LRRNNPALAY (204 aa)) is A2. Arginine 254 is a substrate binding site. The active-site Nucleophile is the aspartate 256. 259-260 (KH) contacts substrate. Position 260 (histidine 260) interacts with Ca(2+). Glutamate 284 serves as the catalytic Proton donor. Residues histidine 354, aspartate 398, and arginine 402 each contribute to the substrate site. Positions 434-522 (GDTEQRWING…EVGVWAYSAT (89 aa)) are c. The segment at 523-606 (ESTPIIGHVG…SAAYDNFEVL (84 aa)) is d. The IPT/TIG domain occupies 526–604 (PIIGHVGPMM…QTSAAYDNFE (79 aa)). A CBM20 domain is found at 605-711 (VLTNDQVSVR…TGKIIVDWQN (107 aa)). Positions 607 to 711 (TNDQVSVRFV…TGKIIVDWQN (105 aa)) are e.

This sequence belongs to the glycosyl hydrolase 13 family. Monomer. Ca(2+) is required as a cofactor.

The protein localises to the secreted. It carries out the reaction Cyclizes part of a (1-&gt;4)-alpha-D-glucan chain by formation of a (1-&gt;4)-alpha-D-glucosidic bond.. The sequence is that of Cyclomaltodextrin glucanotransferase (cgt) from Geobacillus stearothermophilus (Bacillus stearothermophilus).